A 182-amino-acid polypeptide reads, in one-letter code: Protein LIGHT-DEPENDENT SHORT HYPOCOTYLS 5 (182 aa).

Over residues 1–16 the composition is skewed to low complexity; the sequence is MEGETAAKAAASSSSS. Disordered stretches follow at residues 1 to 22 and 138 to 168; these read MEGETAAKAAASSSSSPSRYES and ARGIPYDKKKRKRPHTDTATPIAGDGDDAEG. The 129-residue stretch at 19 to 147 folds into the ALOG domain; it reads RYESQKRRDW…ARGIPYDKKK (129 aa). A Nuclear localization signal motif is present at residues 145–149; it reads KKKRK.

Belongs to the plant homeotic and developmental regulators ALOG protein family.

Its subcellular location is the nucleus. Probable transcription regulator that acts as a developmental regulator by promoting cell growth in response to light. This is Protein LIGHT-DEPENDENT SHORT HYPOCOTYLS 5 (LSH5) from Arabidopsis thaliana (Mouse-ear cress).